The following is a 535-amino-acid chain: Glutamate--cysteine ligase (535 aa).

This sequence belongs to the glutamate--cysteine ligase type 1 family. Type 1 subfamily.

It carries out the reaction L-cysteine + L-glutamate + ATP = gamma-L-glutamyl-L-cysteine + ADP + phosphate + H(+). It participates in sulfur metabolism; glutathione biosynthesis; glutathione from L-cysteine and L-glutamate: step 1/2. This chain is Glutamate--cysteine ligase, found in Pseudomonas savastanoi pv. phaseolicola (strain 1448A / Race 6) (Pseudomonas syringae pv. phaseolicola (strain 1448A / Race 6)).